A 600-amino-acid polypeptide reads, in one-letter code: Elongation factor 4 (600 aa).

In terms of domain architecture, tr-type G spans 6–188; the sequence is KLIRNFSIIA…AVVERIPAPK (183 aa). Residues 18-23 and 135-138 each bind GTP; these read DHGKST and NKID.

This sequence belongs to the TRAFAC class translation factor GTPase superfamily. Classic translation factor GTPase family. LepA subfamily.

The protein resides in the cell inner membrane. The catalysed reaction is GTP + H2O = GDP + phosphate + H(+). In terms of biological role, required for accurate and efficient protein synthesis under certain stress conditions. May act as a fidelity factor of the translation reaction, by catalyzing a one-codon backward translocation of tRNAs on improperly translocated ribosomes. Back-translocation proceeds from a post-translocation (POST) complex to a pre-translocation (PRE) complex, thus giving elongation factor G a second chance to translocate the tRNAs correctly. Binds to ribosomes in a GTP-dependent manner. This Sorangium cellulosum (strain So ce56) (Polyangium cellulosum (strain So ce56)) protein is Elongation factor 4.